The following is an 826-amino-acid chain: Ubiquitin carboxyl-terminal hydrolase 16 (826 aa).

The segment at 22–142 (PMCRHIRKGL…QVVDYVRKQA (121 aa)) adopts a UBP-type zinc-finger fold. Residues cysteine 24, histidine 26, cysteine 48, cysteine 51, cysteine 74, cysteine 77, cysteine 82, histidine 90, histidine 94, histidine 103, cysteine 116, and cysteine 119 each coordinate Zn(2+). Lysine 140 is covalently cross-linked (Glycyl lysine isopeptide (Lys-Gly) (interchain with G-Cter in SUMO2)). The tract at residues 146–190 (TPKPAEKDNGNIELENKKLEKESKNEQEREKKENMAKENPPMNSP) is disordered. Positions 149–181 (PAEKDNGNIELENKKLEKESKNEQEREKKENMA) are enriched in basic and acidic residues. At serine 189 the chain carries Phosphoserine. Positions 196–825 (KGLSNLGNTC…QAYLLFYERI (630 aa)) constitute a USP domain. Cysteine 205 (nucleophile) is an active-site residue. The segment covering 394-408 (SGKKSVNDKNLKKTM) has biased composition (basic and acidic residues). The disordered stretch occupies residues 394 to 460 (SGKKSVNDKN…AKNQRRQQKI (67 aa)). Over residues 409–420 (EDEDQDSEEEKD) the composition is skewed to acidic residues. Serine 415 is subject to Phosphoserine. Basic and acidic residues predominate over residues 421–430 (NDSYIKERSD). Residues 438–458 (HLQKKAKKQAKKQAKNQRRQQ) show a composition bias toward basic residues. At serine 552 the chain carries Phosphoserine. Threonine 557 is modified (phosphothreonine). The active-site Proton acceptor is histidine 761.

Belongs to the peptidase C19 family. USP16 subfamily. Homotetramer. Associates with late pre-40S ribosomes. Interacts with CEP78; promoting deubiquitination of tektins. In terms of processing, phosphorylated at the onset of mitosis and dephosphorylated during the metaphase/anaphase transition. Phosphorylation by AURKB enhances the deubiquitinase activity.

Its subcellular location is the nucleus. It catalyses the reaction Thiol-dependent hydrolysis of ester, thioester, amide, peptide and isopeptide bonds formed by the C-terminal Gly of ubiquitin (a 76-residue protein attached to proteins as an intracellular targeting signal).. Its function is as follows. Specifically deubiquitinates 'Lys-120' of histone H2A (H2AK119Ub), a specific tag for epigenetic transcriptional repression, thereby acting as a coactivator. Deubiquitination of histone H2A is a prerequisite for subsequent phosphorylation at 'Ser-11' of histone H3 (H3S10ph), and is required for chromosome segregation when cells enter into mitosis. In resting B- and T-lymphocytes, phosphorylation by AURKB leads to enhance its activity, thereby maintaining transcription in resting lymphocytes. Regulates Hox gene expression via histone H2A deubiquitination. Prefers nucleosomal substrates. Does not deubiquitinate histone H2B. Also deubiquitinates non-histone proteins, such as ribosomal protein RPS27A: deubiquitination of monoubiquitinated RPS27A promotes maturation of the 40S ribosomal subunit. Also mediates deubiquitination of tektin proteins (TEKT1, TEKT2, TEK3, TEKT4 and TEKT5), promoting their stability. This chain is Ubiquitin carboxyl-terminal hydrolase 16, found in Macaca fascicularis (Crab-eating macaque).